A 581-amino-acid polypeptide reads, in one-letter code: Arginine--tRNA ligase (581 aa).

The 'HIGH' region motif lies at 126–136; sequence PNLAKEMHVGH.

Belongs to the class-I aminoacyl-tRNA synthetase family. As to quaternary structure, monomer.

It is found in the cytoplasm. The enzyme catalyses tRNA(Arg) + L-arginine + ATP = L-arginyl-tRNA(Arg) + AMP + diphosphate. The chain is Arginine--tRNA ligase from Shewanella sp. (strain MR-4).